The following is a 265-amino-acid chain: Indole-3-glycerol phosphate synthase (265 aa).

The protein belongs to the TrpC family.

The enzyme catalyses 1-(2-carboxyphenylamino)-1-deoxy-D-ribulose 5-phosphate + H(+) = (1S,2R)-1-C-(indol-3-yl)glycerol 3-phosphate + CO2 + H2O. It functions in the pathway amino-acid biosynthesis; L-tryptophan biosynthesis; L-tryptophan from chorismate: step 4/5. In Desulforamulus reducens (strain ATCC BAA-1160 / DSM 100696 / MI-1) (Desulfotomaculum reducens), this protein is Indole-3-glycerol phosphate synthase.